Here is a 733-residue protein sequence, read N- to C-terminus: Cyclic nucleotide-gated channel (733 aa).

Disordered stretches follow at residues 1–33 (MSTA…PTAS) and 67–95 (PNGN…IEVP). Over 1–125 (MSTAEPAPDP…PSTDNFYYWT (125 aa)) the chain is Cytoplasmic. Residues 12–25 (NPSTSGLAPTTNGI) show a composition bias toward polar residues. A helical membrane pass occupies residues 126–148 (CVVTVAYIYNLLFVIARQVFNDL). The Extracellular portion of the chain corresponds to 149-197 (IGPSSQSLCRFYNGTLNSTTQVECTYNMLTNMKEMPTYSQYPDLGWSKY). A helical transmembrane segment spans residues 198-217 (WHFRMLWVFFDLLMDCVYLI). The Cytoplasmic portion of the chain corresponds to 218 to 251 (DTFLNYRMGYMDQGLVVREAEKVTKAYWQSKQYR). Residues 252–265 (IDGISLIPLDYILG) form a helical membrane-spanning segment. Topologically, residues 266-276 (WPIPYINWRGL) are extracellular. The chain crosses the membrane as a helical span at residues 277-287 (PILRLNRLIRY). Over 288–308 (KRVRNCLERTETRSSMPNAFR) the chain is Cytoplasmic. A helical membrane pass occupies residues 309–331 (VVVVVWYIVIIIHWNACLYFWIS). The Extracellular segment spans residues 332-362 (EWIGLGTDAWVYGHLNKQSLPDDITDTLLRR). Helical transmembrane passes span 363-385 (YVYS…SPVR) and 386-411 (NIEY…GNVG). The interval 376–379 (TIGE) is selectivity filter. Glutamate 379 is a Na(+) binding site. Residues 412-733 (SMISNMSAAR…TGTESESLLK (322 aa)) lie on the Cytoplasmic side of the membrane. Residues 419–496 (AARTEFQNKM…TLRKVRIFQD (78 aa)) are C-linker. The cyclic nucleotide-binding domain stretch occupies residues 493-607 (IFQDCEAGLL…ALREYPDARK (115 aa)). 3',5'-cyclic GMP is bound at residue glycine 559. Glutamate 560 provides a ligand contact to 3',5'-cyclic AMP. 5 residues coordinate 3',5'-cyclic GMP: serine 562, arginine 575, threonine 576, lysine 619, and aspartate 620. Position 575 (arginine 575) interacts with 3',5'-cyclic AMP. The interval 694-733 (SIDGGDISTDGVDERVRPPRLRQTKTIDLPTGTESESLLK) is disordered.

Belongs to the cyclic nucleotide-gated cation channel (TC 1.A.1.5) family. In terms of assembly, homotetramer. In terms of tissue distribution, expressed at the sensory endings of thermosensory, gustatory, and olfactory neurons.

The protein localises to the cell membrane. It is found in the cell projection. It localises to the cilium. The enzyme catalyses Ca(2+)(in) = Ca(2+)(out). It catalyses the reaction Na(+)(in) = Na(+)(out). It carries out the reaction K(+)(in) = K(+)(out). Functionally, pore-forming subunit of the cyclic nucleotide-gated channel. Required for normal thermosensation and chemosensation sensory behavior. Required, downstream of receptor-type guanylate cyclase gcy-9, for CO2-mediated responses in BAG neurons. Required, downstream of receptor-type guanylate cyclase gcy-14, for alkaline pH-mediated responses in ASE-left (ASEL) neurons. Involved in the development of ASJ sensory neuron axon during late larval stages and in the maintenance of normal axon morphology in the adult. Regulates dauer formation. Required for the calcium flux to the cytoplasm in the ASJ sensory neurons upon the onset and removal of a nitric oxide (NO) stimulus, thereby promoting the ASJ-mediated behavioral avoidance response to NO-producing organisms like P.aeruginosa. In ASI and ASJ sensory neurons, controls behavioral response to P.aeruginosa by up-regulating the transcription of daf-7, a member of the TGF-beta family. In AWB and AWC sensory neurons, mediates the recognition of food odors which subsequently allows for the detection of preferred food sources. In AWC neurons, acts to promote expression of srsx-3, a member of the GPCR family. Binding to cGMP results in conformational changes at the hydrophobic gate that converts the protein from an inactive closed state to an active open state. This chain is Cyclic nucleotide-gated channel (tax-4), found in Caenorhabditis elegans.